The sequence spans 755 residues: 17S U2 SnRNP complex component HTATSF1 (755 aa).

2 disordered regions span residues 1–53 and 81–122; these read MSGT…YEWD and GASS…KAES. Ser2 bears the N-acetylserine mark. Positions 90–122 are enriched in basic and acidic residues; sequence EDVHARTAEEPPQEKAPEPTDARKKGEKRKAES. 2 consecutive RRM domains span residues 133–218 and 264–349; these read TNVY…VAKF and RVVI…AWDG. The U2AF homology motif (UHM) stretch occupies residues 259 to 353; the sequence is RMRHERVVII…AQAWDGTTDY (95 aa). N6-acetyllysine is present on Lys297. Residues 380 to 415 form a disordered region; sequence RGLRRSDSVSASERAGPSRARHFSEHPSTSKMNAQE. Positions 381 to 755 are mediates interaction with the P-TEFb complex; that stretch reads GLRRSDSVSA…LSSDDDDDDI (375 aa). Residues Ser387, Ser403, Ser407, and Ser409 each carry the phosphoserine modification. Residues 405 to 415 are compositionally biased toward polar residues; sequence HPSTSKMNAQE. Residues Lys429 and Lys430 each participate in a glycyl lysine isopeptide (Lys-Gly) (interchain with G-Cter in SUMO2) cross-link. Residues 433 to 755 form a disordered region; it reads KTEDGGEFEE…LSSDDDDDDI (323 aa). Phosphoserine is present on residues Ser445, Ser452, and Ser453. Positions 462–476 are enriched in basic and acidic residues; that stretch reads CPEKESEEGCPKRGF. Residues Ser481, Ser485, Ser494, Ser498, Ser521, and Ser529 each carry the phosphoserine modification. Residues 508–538 show a composition bias toward basic and acidic residues; it reads LKNDCEENGLAKESEDDLNKESEEEVGPTKE. A compositionally biased stretch (acidic residues) spans 539–552; that stretch reads SEEDDSEKESDEDC. The segment covering 553-563 has biased composition (basic and acidic residues); it reads SEKQSEDGSER. Phosphoserine is present on residues Ser557, Ser561, and Ser579. Residues 564–579 show a composition bias toward acidic residues; sequence EFEENGLEKDLDEEGS. Residues 580 to 590 show a composition bias toward basic and acidic residues; that stretch reads EKELHENVLDK. The segment covering 591 to 606 has biased composition (acidic residues); sequence ELEENDSENSEFEDDG. A phosphoserine mark is found at Ser597, Ser600, Ser607, Ser616, and Ser624. Composition is skewed to acidic residues over residues 613-633 and 640-651; these read EEGS…EEDT and DESDEKEDEEYA. Thr633 is modified (phosphothreonine). Phosphoserine is present on Ser642. A compositionally biased stretch (basic and acidic residues) spans 652–674; it reads DEKGLEAADKKAEEGDADEKLFE. Over residues 675–713 the composition is skewed to acidic residues; that stretch reads ESDDKEDEDADGKEVEDADEKLFEDDDSNEKLFDEEEDS. Phosphoserine occurs at positions 676, 702, 713, 714, and 721. A compositionally biased stretch (basic and acidic residues) spans 714–725; the sequence is SEKLFDDSDERG. Phosphoserine; by CK2 is present on Ser748.

Belongs to the HTATSF1 family. Component of the 17S U2 SnRNP complex, a ribonucleoprotein complex that contains small nuclear RNA (snRNA) U2 and a number of specific proteins. Within the 17S U2 SnRNP complex, interacts (via UHM region) directly with SF3B1. Component of a complex which is at least composed of HTATSF1/Tat-SF1, the P-TEFb complex components CDK9 and CCNT1, RNA polymerase II, SUPT5H, and NCL/nucleolin. Interacts with GTF2F2/RAP30 and POLR2A. Interacts with TCERG1/CA150. Interacts with (poly-ADP-ribosylated) RPA1; promoting HTATSF1 recruitment to DNA damage sites. Interacts (when phosphorylated) with TOPBP1; promoting recruitment of TOPBP1 to DNA damage sites during S-phase. In terms of processing, phosphorylation at Ser-748 by CK2 during S-phase in response to DNA damage promotes interaction with TOPBP1 and double-strand break (DSB) repair via homologous recombination. As to expression, widely expressed.

It localises to the nucleus. The protein localises to the chromosome. In terms of biological role, component of the 17S U2 SnRNP complex of the spliceosome, a large ribonucleoprotein complex that removes introns from transcribed pre-mRNAs. The 17S U2 SnRNP complex (1) directly participates in early spliceosome assembly and (2) mediates recognition of the intron branch site during pre-mRNA splicing by promoting the selection of the pre-mRNA branch-site adenosine, the nucleophile for the first step of splicing. Within the 17S U2 SnRNP complex, HTATSF1 is required to stabilize the branchpoint-interacting stem loop. HTATSF1 is displaced from the 17S U2 SnRNP complex before the stable addition of the 17S U2 SnRNP complex to the spliceosome, destabilizing the branchpoint-interacting stem loop and allowing to probe intron branch site sequences. Also acts as a regulator of transcriptional elongation, possibly by mediating the reciprocal stimulatory effect of splicing on transcriptional elongation. Involved in double-strand break (DSB) repair via homologous recombination in S-phase by promoting the recruitment of TOPBP1 to DNA damage sites. Mechanistically, HTATSF1 is (1) recruited to DNA damage sites in S-phase via interaction with poly-ADP-ribosylated RPA1 and (2) phosphorylated by CK2, promoting recruitment of TOPBP1, thereby facilitating RAD51 nucleofilaments formation and RPA displacement, followed by homologous recombination. (Microbial infection) In case of infection by HIV-1, it is up-regulated by the HIV-1 proteins NEF and gp120, acts as a cofactor required for the Tat-enhanced transcription of the virus. The chain is 17S U2 SnRNP complex component HTATSF1 from Homo sapiens (Human).